Here is a 283-residue protein sequence, read N- to C-terminus: Thymidylate synthase (283 aa).

A dUMP-binding site is contributed by R22. The active-site Nucleophile is C160. DUMP contacts are provided by residues 180 to 183 (RSCD), N191, and 221 to 223 (HIY). Position 183 (D183) interacts with (6R)-5,10-methylene-5,6,7,8-tetrahydrofolate. (6R)-5,10-methylene-5,6,7,8-tetrahydrofolate is bound at residue S282.

The protein belongs to the thymidylate synthase family. Bacterial-type ThyA subfamily. In terms of assembly, homodimer.

The protein resides in the cytoplasm. It catalyses the reaction dUMP + (6R)-5,10-methylene-5,6,7,8-tetrahydrofolate = 7,8-dihydrofolate + dTMP. The protein operates within pyrimidine metabolism; dTTP biosynthesis. Its function is as follows. Catalyzes the reductive methylation of 2'-deoxyuridine-5'-monophosphate (dUMP) to 2'-deoxythymidine-5'-monophosphate (dTMP) while utilizing 5,10-methylenetetrahydrofolate (mTHF) as the methyl donor and reductant in the reaction, yielding dihydrofolate (DHF) as a by-product. This enzymatic reaction provides an intracellular de novo source of dTMP, an essential precursor for DNA biosynthesis. The sequence is that of Thymidylate synthase from Psychromonas ingrahamii (strain DSM 17664 / CCUG 51855 / 37).